A 274-amino-acid chain; its full sequence is Thiamine kinase (274 aa).

The protein belongs to the thiamine kinase family.

It catalyses the reaction thiamine + ATP = thiamine phosphate + ADP + H(+). It participates in cofactor biosynthesis; thiamine diphosphate biosynthesis; thiamine phosphate from thiamine: step 1/1. Its function is as follows. Catalyzes the ATP-dependent phosphorylation of thiamine to thiamine phosphate. Is involved in thiamine salvage. The sequence is that of Thiamine kinase from Escherichia coli (strain SMS-3-5 / SECEC).